The primary structure comprises 295 residues: Pantothenate synthetase (295 aa).

Position 29-36 (29-36) interacts with ATP; it reads MGALHSGH. H36 serves as the catalytic Proton donor. Q60 serves as a coordination point for (R)-pantoate. Q60 contributes to the beta-alanine binding site. 158–161 contributes to the ATP binding site; that stretch reads GQKD. Q164 is a binding site for (R)-pantoate. Residues V187 and 195–198 each bind ATP; that span reads LSSR.

The protein belongs to the pantothenate synthetase family. In terms of assembly, homodimer.

Its subcellular location is the cytoplasm. It catalyses the reaction (R)-pantoate + beta-alanine + ATP = (R)-pantothenate + AMP + diphosphate + H(+). Its pathway is cofactor biosynthesis; (R)-pantothenate biosynthesis; (R)-pantothenate from (R)-pantoate and beta-alanine: step 1/1. Catalyzes the condensation of pantoate with beta-alanine in an ATP-dependent reaction via a pantoyl-adenylate intermediate. The protein is Pantothenate synthetase of Paenarthrobacter aurescens (strain TC1).